Consider the following 93-residue polypeptide: Stage III sporulation protein D (93 aa).

The region spanning 4 to 75 (YIKERTIKIG…IRHLRGGEAT (72 aa)) is the HTH deoR-type domain. A DNA-binding region (H-T-H motif) is located at residues 21–40 (KTVRVIAKEFGVSKSTVHKD).

Functionally, this protein regulates the transcription of sigK, which encodes mother cell chamber RNA polymerase sigma-factor (sigma K). This is Stage III sporulation protein D (spoIIID) from Bacillus subtilis (strain 168).